The following is a 404-amino-acid chain: Nicotinate phosphoribosyltransferase (404 aa).

At histidine 225 the chain carries Phosphohistidine; by autocatalysis.

This sequence belongs to the NAPRTase family. Post-translationally, transiently phosphorylated on a His residue during the reaction cycle. Phosphorylation strongly increases the affinity for substrates and increases the rate of nicotinate D-ribonucleotide production. Dephosphorylation regenerates the low-affinity form of the enzyme, leading to product release.

It carries out the reaction nicotinate + 5-phospho-alpha-D-ribose 1-diphosphate + ATP + H2O = nicotinate beta-D-ribonucleotide + ADP + phosphate + diphosphate. The protein operates within cofactor biosynthesis; NAD(+) biosynthesis; nicotinate D-ribonucleotide from nicotinate: step 1/1. Functionally, catalyzes the synthesis of beta-nicotinate D-ribonucleotide from nicotinate and 5-phospho-D-ribose 1-phosphate at the expense of ATP. This Acinetobacter baumannii (strain ATCC 17978 / DSM 105126 / CIP 53.77 / LMG 1025 / NCDC KC755 / 5377) protein is Nicotinate phosphoribosyltransferase.